A 259-amino-acid chain; its full sequence is Type III pantothenate kinase (259 aa).

ATP is bound at residue 6 to 13 (DCGNTNTV). 107–110 (GPDR) is a substrate binding site. Residue Asp-109 is the Proton acceptor of the active site. Asp-129 lines the K(+) pocket. Thr-132 contributes to the ATP binding site. Thr-184 contacts substrate.

It belongs to the type III pantothenate kinase family. In terms of assembly, homodimer. The cofactor is NH4(+). Requires K(+) as cofactor.

It is found in the cytoplasm. It carries out the reaction (R)-pantothenate + ATP = (R)-4'-phosphopantothenate + ADP + H(+). It participates in cofactor biosynthesis; coenzyme A biosynthesis; CoA from (R)-pantothenate: step 1/5. In terms of biological role, catalyzes the phosphorylation of pantothenate (Pan), the first step in CoA biosynthesis. The polypeptide is Type III pantothenate kinase (Ruegeria pomeroyi (strain ATCC 700808 / DSM 15171 / DSS-3) (Silicibacter pomeroyi)).